The chain runs to 170 residues: MSHRTSSTFRAERSFHSSSSSSSSSTSSSASRALPAQDPPMEKALSMFSDDFGSFMRPHSEPLAFPARPGGAGNIKTLGDAYEFAVDVRDFSPEDIIVTTSNNHIEVRAEKLAADGTVMNTFAHKCQLPEDVDPTSVTSALREDGSLTIRARRHPHTEHVQQTFRTEIKI.

The interval 1 to 39 is disordered; the sequence is MSHRTSSTFRAERSFHSSSSSSSSSTSSSASRALPAQDP. A required for localization to SC35 splicing speckles region spans residues 1–71; it reads MSHRTSSTFR…PLAFPARPGG (71 aa). Residues 16–31 show a composition bias toward low complexity; it reads HSSSSSSSSSTSSSAS. The 109-residue stretch at 62-170 folds into the sHSP domain; that stretch reads PLAFPARPGG…QQTFRTEIKI (109 aa).

Belongs to the small heat shock protein (HSP20) family. Interacts with C-terminal domain of actin-binding protein 280. In terms of tissue distribution, isoform 1 is highly expressed in adult and fetal heart, skeletal muscle, and at a much lower levels in adipose tissue and in aorta. Undetectable in other tissues. Isoform 2 and isoform 3 are poorly detected in heart.

The protein localises to the cytoplasm. Its subcellular location is the nucleus. The protein resides in the cajal body. The chain is Heat shock protein beta-7 (HSPB7) from Homo sapiens (Human).